The sequence spans 306 residues: Enoyl-CoA isomerase/hydratase MYCGRDRAFT_76805 (306 aa).

Substrate-binding positions include 103–107 (AGADL) and Gly-150.

This sequence belongs to the enoyl-CoA hydratase/isomerase family.

The catalysed reaction is a (3S)-3-hydroxyacyl-CoA = a (2E)-enoyl-CoA + H2O. The enzyme catalyses a 4-saturated-(3S)-3-hydroxyacyl-CoA = a (3E)-enoyl-CoA + H2O. Its pathway is siderophore biosynthesis. Its function is as follows. Enoyl-CoA isomerase/hydratase involved in the biosynthesis of a ferrichrome A-like siderophore which may contribute to organismal virulence. The first step of siderophore biosynthesis is performed by the HMG-CoA synthase (HMGS) MYCGRDRAFT_54740 which catalyzes the generation of HMG-CoA and CoA using acetoacetyl-CoA and acetyl-CoA as substrates. The enoyl-CoA isomerase/hydratase MYCGRDRAFT_76805 then catalyzes the conversion of HMG-CoA to methylglutaconyl-CoA. The acyltransferase MYCGRDRAFT_85486 then fuses methylglutaconyl-CoA with hydroxyornithine to yield methylglutaconyl hydroxyornithine. Methylglutaconyl hydroxyornithine is then available for use by the nonribosomal peptide synthetase NRPS2 to generate the ferrichrome A-like siderophore. The polypeptide is Enoyl-CoA isomerase/hydratase MYCGRDRAFT_76805 (Zymoseptoria tritici (strain CBS 115943 / IPO323) (Speckled leaf blotch fungus)).